The sequence spans 206 residues: MEENKLKFNLQFFADQSDDPDEPGGDGKKGNPDKKENDEGTEITFTPEQQKKVDEILERRVAHEKKKADEYAKEKAAEAAKEAAKLAKMNKDQKDEYEREQMEKELEQLRSEKQLNEMRSEARKMLSEAEVDSSDEVVNLVVTDTAEQTKSNVEAFSNAVKKAVNEAVKVNARQSPLTGGDSFNHSTKNKPQNLAEIARQKRIIKN.

Residues 1 to 13 (MEENKLKFNLQFF) constitute a propeptide that is removed on maturation. Disordered stretches follow at residues 1-50 (MEEN…PEQQ), 83-134 (AAKL…VDSS), and 173-206 (RQSPLTGGDSFNHSTKNKPQNLAEIARQKRIIKN). Composition is skewed to basic and acidic residues over residues 25 to 38 (GDGKKGNPDKKEND) and 83 to 127 (AAKL…KMLS). Polar residues predominate over residues 173–192 (RQSPLTGGDSFNHSTKNKPQ). The helix-and-hook motif stretch occupies residues 186 to 206 (STKNKPQNLAEIARQKRIIKN).

In terms of assembly, found in the procapsid with the major capsid protein in a 2:1 capsid protein:scaffold protein molecular ratio. Post-translationally, the N-terminus is cleaved by ribosomal processing protease Prp.

Its function is as follows. Scaffolding protein involved in icosahedric procapsid assembly. Coassembles with capsid protein(s) to form the procapsid. The scaffolding protein is found within the capsid as a series of concentric shells. During DNA packaging, the scaffolding protein molecules are released from the procapsid. This Staphylococcus phage 80alpha protein is Capsid assembly scaffolding protein.